A 361-amino-acid chain; its full sequence is Palmitoyltransferase ZDHHC2 (361 aa).

The Cytoplasmic segment spans residues 1-15 (MAPSGSRSFDCWRVL). Residues 16–36 (YWIPVLFISLIVAWSYYAYVV) form a helical membrane-spanning segment. Residues 37-50 (QLCIETIENMGEKT) lie on the Lumenal side of the membrane. The helical transmembrane segment at 51-71 (VYLLIYHLLFLMFVWSYWQTI) threads the bilayer. Residues 72-167 (YSKPMNPLKE…NNCVGFANYK (96 aa)) lie on the Cytoplasmic side of the membrane. Residues 124–174 (RYCDRCLLLKPDRCHHCSACDMCILKMDHHCPWVNNCVGFANYKFFMLFLA) enclose the DHHC domain. C154 serves as the catalytic S-palmitoyl cysteine intermediate. Residues 168 to 188 (FFMLFLAYSLLYCLFVTATDM) form a helical membrane-spanning segment. At 189–207 (QYFIQFWTNGLPDTQAKFH) the chain is on the lumenal side. The helical transmembrane segment at 208-228 (IMFLFFAASTFSVSLAFLFAY) threads the bilayer. Over 229–361 (HCWLVCKNRS…NPALTIEKET (133 aa)) the chain is Cytoplasmic. The segment at 296–361 (NPDPEQPSIP…NPALTIEKET (66 aa)) is mediates localization to plasma membrane and recycling endosomes. A compositionally biased stretch (pro residues) spans 299 to 308 (PEQPSIPPGR). The tract at residues 299–361 (PEQPSIPPGR…NPALTIEKET (63 aa)) is disordered. The span at 331-340 (SRLLNNGQTD) shows a compositional bias: polar residues. A Non-canonical dileucine endocytic signal motif is present at residues 333 to 334 (LL). The NPxY-like endocytic signal motif lies at 352–355 (NPAL).

This sequence belongs to the DHHC palmitoyltransferase family. As to quaternary structure, monomer. Homodimer. The monomeric form has a higher catalytic activity. Post-translationally, autopalmitoylated.

It localises to the endoplasmic reticulum membrane. It is found in the golgi apparatus membrane. Its subcellular location is the postsynaptic density. The protein resides in the postsynaptic recycling endosome membrane. The protein localises to the cell membrane. It carries out the reaction L-cysteinyl-[protein] + hexadecanoyl-CoA = S-hexadecanoyl-L-cysteinyl-[protein] + CoA. It catalyses the reaction L-cysteinyl-[protein] + tetradecanoyl-CoA = S-tetradecanoyl-L-cysteinyl-[protein] + CoA. The catalysed reaction is L-cysteinyl-[protein] + octadecanoyl-CoA = S-octadecanoyl-L-cysteinyl-[protein] + CoA. In terms of biological role, palmitoyltransferase that catalyzes the addition of palmitate onto various protein substrates and is involved in a variety of cellular processes. Has no stringent fatty acid selectivity and in addition to palmitate can also transfer onto target proteins myristate from tetradecanoyl-CoA and stearate from octadecanoyl-CoA. In Danio rerio (Zebrafish), this protein is Palmitoyltransferase ZDHHC2.